Here is a 459-residue protein sequence, read N- to C-terminus: MLLDLNRFSFSVFLKEVRLLTALALPMLLAQVAQVGIGFVDTVMAGGAGKEDLAAVALGSSAFATVYITFMGIMAALNPMIAQLYGAGKTDEVGETGRQGIWFGLFLGVFGMVLMWAAITPFRNWLTLSDYVEGTMAQYMLFTSLAMPAAMVHRALHAYASSLNRPRLIMLVSFAAFVLNVPLNYIFVYGKFGMPALGGAGCGLATMAVFWFSALALWIYIAKENFFRPFGLTAKFGKPDWAVFKQIWKIGAPIGLSYFLEASAFSFIVFLIAPFGEDYVAAQQVGISLSGILYMIPQSVGSAGTVRIGFSLGRREFSRARYISGVSLVSGWMLAVITVLSLVLFRSPLVSMYNNDPAVLSIAATVLLFAGLFQPADFTQCIASYALRGYKVTKVPMFIHAAAFWGCGLLPGYLLAYRFDMGIYGFWTALIASLTIAAIALVWCLELCSREMVRSHKAV.

12 consecutive transmembrane segments (helical) span residues leucine 20 to valine 40, leucine 53 to isoleucine 73, glycine 100 to threonine 120, valine 132 to valine 152, leucine 168 to valine 188, cysteine 202 to alanine 222, alanine 252 to isoleucine 272, valine 285 to threonine 305, glycine 325 to phenylalanine 345, alanine 358 to phenylalanine 378, valine 395 to leucine 415, and isoleucine 423 to tryptophan 443.

This sequence belongs to the multi antimicrobial extrusion (MATE) (TC 2.A.66.1) family.

Its subcellular location is the cell inner membrane. Its function is as follows. Multidrug efflux pump. This is Probable multidrug resistance protein NorM (norM) from Neisseria meningitidis serogroup A / serotype 4A (strain DSM 15465 / Z2491).